Here is a 535-residue protein sequence, read N- to C-terminus: EH domain-containing protein 3 (535 aa).

The residue at position 1 (Met1) is an N-acetylmethionine. The Dynamin-type G domain occupies 55-286; sequence FDNKPMVLLV…DLFRDIQSLP (232 aa). Positions 65–72 are G1 motif; that stretch reads GQYSTGKT. 65–72 contributes to the ATP binding site; it reads GQYSTGKT. A G2 motif region spans residues 91–92; the sequence is EP. Residues 153–156 form a G3 motif region; it reads DTPG. Residues 198-227 adopt a coiled-coil conformation; sequence DEFSEVIKALKNHEDKMRVVLNKADQIETQ. A G4 motif region spans residues 219-222; that stretch reads NKAD. Lys220 is a binding site for ATP. Position 243 (Ile243) is a region of interest, G5 motif. Trp258 lines the ATP pocket. Lys315 is covalently cross-linked (Glycyl lysine isopeptide (Lys-Gly) (interchain with G-Cter in SUMO)). Phosphoserine occurs at positions 349 and 456. The EH domain maps to 444-532; that stretch reads DKPMYDEIFY…AHLLPPSKRK (89 aa). Residues 476-511 form the EF-hand domain; that stretch reads LPNSVLGKIWKLADIDKDGMLDDEEFALANHLIKVK. Ca(2+) contacts are provided by Asp489, Asp491, Asp493, Met495, and Glu500. Lys511 participates in a covalent cross-link: Glycyl lysine isopeptide (Lys-Gly) (interchain with G-Cter in SUMO).

Belongs to the TRAFAC class dynamin-like GTPase superfamily. Dynamin/Fzo/YdjA family. EHD subfamily. Homooligomer. Heterooligomer with EHD1. Heterooligomer with EHD2 and EHD4; ATP-binding is required for heterooligomerization. Interacts with PACSIN1. Interacts with PACSIN2. Interacts (via EH domain) with MICALL1. Interacts (via EH domain) with RAB11FIP2. Interacts with ANK2. Interacts with CACNA1GG and CACNA1H. In terms of tissue distribution, strong expression seen in the kidney, brain and liver. In the kidney, expressed exclusively by glomerular endothelial cells; at protein level. Expressed in skeletal muscle neuromuscular junction perisynaptic region; at protein level.

It localises to the recycling endosome membrane. It is found in the cell membrane. The protein localises to the cell projection. Its subcellular location is the cilium membrane. The protein resides in the cytoplasmic vesicle. ATP- and membrane-binding protein that controls membrane reorganization/tubulation upon ATP hydrolysis. In vitro causes tubulation of endocytic membranes. Binding to phosphatidic acid induces its membrane tubulation activity. Plays a role in endocytic transport. Involved in early endosome to recycling endosome compartment (ERC), retrograde early endosome to Golgi, and endosome to plasma membrane (rapid recycling) protein transport. Involved in the regulation of Golgi maintenance and morphology. Involved in the recycling of internalized D1 dopamine receptor. Plays a role in cardiac protein trafficking probably implicating ANK2. Involved in the ventricular membrane targeting of SLC8A1 and CACNA1C and probably the atrial membrane localization of CACNA1GG and CACNA1H implicated in the regulation of atrial myocyte excitability and cardiac conduction. In conjunction with EHD4 may be involved in endocytic trafficking of KDR/VEGFR2 implicated in control of glomerular function. Involved in the rapid recycling of integrin beta-3 implicated in cell adhesion maintenance. Involved in the unidirectional retrograde dendritic transport of endocytosed BACE1 and in efficient sorting of BACE1 to axons implicating a function in neuronal APP processing. Plays a role in the formation of the ciliary vesicle, an early step in cilium biogenesis; possibly sharing redundant functions with Ehd1. The polypeptide is EH domain-containing protein 3 (Mus musculus (Mouse)).